A 144-amino-acid chain; its full sequence is Phosphomevalonate dehydratase small subunit (144 aa).

S65 (proton acceptor) is an active-site residue.

This sequence belongs to the AcnX type II small subunit family. In terms of assembly, heterodimer composed of a large subunit (PMDh-L) and a small subunit (PMDh-S).

The catalysed reaction is (R)-5-phosphomevalonate = (2E)-3-methyl-5-phosphooxypent-2-enoate + H2O. It participates in isoprenoid biosynthesis; isopentenyl diphosphate biosynthesis via mevalonate pathway. In terms of biological role, component of a hydro-lyase that catalyzes the dehydration of mevalonate 5-phosphate (MVA5P) to form trans-anhydromevalonate 5-phosphate (tAHMP). Involved in the archaeal mevalonate (MVA) pathway, which provides fundamental precursors for isoprenoid biosynthesis, such as isopentenyl diphosphate (IPP) and dimethylallyl diphosphate (DMAPP). The protein is Phosphomevalonate dehydratase small subunit of Methanosarcina acetivorans (strain ATCC 35395 / DSM 2834 / JCM 12185 / C2A).